The chain runs to 141 residues: Large ribosomal subunit protein uL16 (141 aa).

Residues 1 to 17 show a composition bias toward basic residues; that stretch reads MLQPKRTKYRKVQKGKM. Residues 1–29 are disordered; sequence MLQPKRTKYRKVQKGKMKGNSQRGHELSN.

This sequence belongs to the universal ribosomal protein uL16 family. As to quaternary structure, part of the 50S ribosomal subunit.

Its function is as follows. Binds 23S rRNA and is also seen to make contacts with the A and possibly P site tRNAs. The chain is Large ribosomal subunit protein uL16 from Flavobacterium psychrophilum (strain ATCC 49511 / DSM 21280 / CIP 103535 / JIP02/86).